A 439-amino-acid polypeptide reads, in one-letter code: Vacuolar zinc transporter COT1 (439 aa).

The Cytoplasmic portion of the chain corresponds to M1–K9. The helical transmembrane segment at I10–L30 threads the bilayer. The Vacuolar portion of the chain corresponds to S31 to S33. A helical transmembrane segment spans residues L34 to L54. The Cytoplasmic segment spans residues W55 to A76. Residues E77–I97 traverse the membrane as a helical segment. Residues E98 to K113 are Vacuolar-facing. A helical transmembrane segment spans residues F114–H134. Residues D135 to V244 are Cytoplasmic-facing. 3 consecutive short sequence motifs (histidine repeat) follow at residues H140–H144, H165–H169, and S219–I223. A compositionally biased stretch (polar residues) spans P207–T230. The tract at residues P207 to E231 is disordered. At S225 the chain carries Phosphoserine. A helical membrane pass occupies residues F245–I265. The Vacuolar portion of the chain corresponds to W266 to Y274. The helical transmembrane segment at Y275–L295 threads the bilayer. The Cytoplasmic portion of the chain corresponds to S296–H439. K301 participates in a covalent cross-link: Glycyl lysine isopeptide (Lys-Gly) (interchain with G-Cter in ubiquitin). Over residues T388 to Q402 the composition is skewed to basic and acidic residues. The disordered stretch occupies residues T388 to L408.

The protein belongs to the cation diffusion facilitator (CDF) transporter (TC 2.A.4) family. SLC30A subfamily.

The protein resides in the vacuole membrane. It catalyses the reaction Zn(2+)(in) = Zn(2+)(out). Functionally, vacuolar transporter that regulates zinc homeostasis by mediating zinc transport and storage into the vacuole. Plays a role in resistance to zinc shock resulting from sudden influx of zinc into cytoplasm. May also participate in the regulation of cobalt levels under normal physiological conditions and may be important in the supply of metal that is required for metalloenzyme or cofactor synthesis. Involved in the resistance to cobalt and rhodium ions. This chain is Vacuolar zinc transporter COT1, found in Saccharomyces cerevisiae (strain ATCC 204508 / S288c) (Baker's yeast).